The following is a 630-amino-acid chain: Chaperone protein HtpG (630 aa).

Residues 1 to 336 (MTTTVEQTAE…TADLPLNVSR (336 aa)) are a; substrate-binding. Positions 337-551 (EMIQESPILA…EDGYDRQMEK (215 aa)) are b. Residues 552–630 (ILQNAGRLQG…VFERSVRSEG (79 aa)) form a c region.

This sequence belongs to the heat shock protein 90 family. Homodimer.

It is found in the cytoplasm. In terms of biological role, molecular chaperone. Has ATPase activity. This chain is Chaperone protein HtpG, found in Rhizobium etli (strain ATCC 51251 / DSM 11541 / JCM 21823 / NBRC 15573 / CFN 42).